We begin with the raw amino-acid sequence, 103 residues long: UPF0145 protein CYA_2258 (103 aa).

It belongs to the UPF0145 family.

The sequence is that of UPF0145 protein CYA_2258 from Synechococcus sp. (strain JA-3-3Ab) (Cyanobacteria bacterium Yellowstone A-Prime).